The chain runs to 256 residues: 1-(5-phosphoribosyl)-5-[(5-phosphoribosylamino)methylideneamino] imidazole-4-carboxamide isomerase (256 aa).

Asp8 functions as the Proton acceptor in the catalytic mechanism. The Proton donor role is filled by Asp129.

Belongs to the HisA/HisF family.

The protein localises to the cytoplasm. The catalysed reaction is 1-(5-phospho-beta-D-ribosyl)-5-[(5-phospho-beta-D-ribosylamino)methylideneamino]imidazole-4-carboxamide = 5-[(5-phospho-1-deoxy-D-ribulos-1-ylimino)methylamino]-1-(5-phospho-beta-D-ribosyl)imidazole-4-carboxamide. It functions in the pathway amino-acid biosynthesis; L-histidine biosynthesis; L-histidine from 5-phospho-alpha-D-ribose 1-diphosphate: step 4/9. In Synechococcus elongatus (strain ATCC 33912 / PCC 7942 / FACHB-805) (Anacystis nidulans R2), this protein is 1-(5-phosphoribosyl)-5-[(5-phosphoribosylamino)methylideneamino] imidazole-4-carboxamide isomerase.